Consider the following 405-residue polypeptide: Protein held out wings (405 aa).

Residues 142–210 enclose the KH domain; it reads YVPVREHPDF…HLSDDLHVLI (69 aa).

In terms of assembly, homodimer. Interacts with Sxl; promoting nuclear retention of msl-2 transcripts. As to expression, during embryogenesis, expression is seen in mesodermal precursors of somatic, visceral and pharyngeal muscle. Later in embryogenesis, expression is restricted to heart and muscle attachment sites of the epidermis. During onset of metamorphosis, expression is seen in muscle and muscle attachment cells.

It is found in the nucleus. Its function is as follows. RNA-binding protein involved in muscle development and dosage compensation. Vital role in steroid regulation of muscle development and to control heart rate. Required during embryogenesis, in late stages of somatic muscle development, for myotube migration and during metamorphosis for muscle reorganization. Required for integrin-mediated cell-adhesion in wing blade. Together with Sxl, acts as an inhibitor of dosage compensation in females by preventing production of msl-2 protein, an essential component of the MSL complex. Specifically binds to the 5'-UTR of msl-2 transcripts and cooperates with Sxl to promote nuclear retention of msl-2 mRNAs. This chain is Protein held out wings (how), found in Drosophila melanogaster (Fruit fly).